Reading from the N-terminus, the 227-residue chain is Cytochrome c oxidase subunit 2 (227 aa).

The Mitochondrial intermembrane segment spans residues 1 to 14 (MAYPLQLGFQDASS). A helical transmembrane segment spans residues 15-45 (PIMEELLHFHDHTLMIVFLISSLVLYIISLM). The Mitochondrial matrix segment spans residues 46-59 (LTTKLTHTSTMDAQ). A helical membrane pass occupies residues 60–87 (EVETIWTILPAIILILIALPSLRILYMM). Topologically, residues 88-227 (DEINNPSLTV…HFENWTTTML (140 aa)) are mitochondrial intermembrane. Residues histidine 161, cysteine 196, glutamate 198, cysteine 200, histidine 204, and methionine 207 each contribute to the Cu cation site. Glutamate 198 serves as a coordination point for Mg(2+).

This sequence belongs to the cytochrome c oxidase subunit 2 family. In terms of assembly, component of the cytochrome c oxidase (complex IV, CIV), a multisubunit enzyme composed of 14 subunits. The complex is composed of a catalytic core of 3 subunits MT-CO1, MT-CO2 and MT-CO3, encoded in the mitochondrial DNA, and 11 supernumerary subunits COX4I, COX5A, COX5B, COX6A, COX6B, COX6C, COX7A, COX7B, COX7C, COX8 and NDUFA4, which are encoded in the nuclear genome. The complex exists as a monomer or a dimer and forms supercomplexes (SCs) in the inner mitochondrial membrane with NADH-ubiquinone oxidoreductase (complex I, CI) and ubiquinol-cytochrome c oxidoreductase (cytochrome b-c1 complex, complex III, CIII), resulting in different assemblies (supercomplex SCI(1)III(2)IV(1) and megacomplex MCI(2)III(2)IV(2)). Found in a complex with TMEM177, COA6, COX18, COX20, SCO1 and SCO2. Interacts with TMEM177 in a COX20-dependent manner. Interacts with COX20. Interacts with COX16. Requires Cu cation as cofactor.

The protein localises to the mitochondrion inner membrane. The enzyme catalyses 4 Fe(II)-[cytochrome c] + O2 + 8 H(+)(in) = 4 Fe(III)-[cytochrome c] + 2 H2O + 4 H(+)(out). In terms of biological role, component of the cytochrome c oxidase, the last enzyme in the mitochondrial electron transport chain which drives oxidative phosphorylation. The respiratory chain contains 3 multisubunit complexes succinate dehydrogenase (complex II, CII), ubiquinol-cytochrome c oxidoreductase (cytochrome b-c1 complex, complex III, CIII) and cytochrome c oxidase (complex IV, CIV), that cooperate to transfer electrons derived from NADH and succinate to molecular oxygen, creating an electrochemical gradient over the inner membrane that drives transmembrane transport and the ATP synthase. Cytochrome c oxidase is the component of the respiratory chain that catalyzes the reduction of oxygen to water. Electrons originating from reduced cytochrome c in the intermembrane space (IMS) are transferred via the dinuclear copper A center (CU(A)) of subunit 2 and heme A of subunit 1 to the active site in subunit 1, a binuclear center (BNC) formed by heme A3 and copper B (CU(B)). The BNC reduces molecular oxygen to 2 water molecules using 4 electrons from cytochrome c in the IMS and 4 protons from the mitochondrial matrix. This chain is Cytochrome c oxidase subunit 2 (MT-CO2), found in Tupaia glis (Common tree shrew).